The sequence spans 492 residues: Protein nucleotidyltransferase YdiU (492 aa).

ATP contacts are provided by glycine 88, glycine 90, arginine 91, lysine 111, aspartate 123, glycine 124, arginine 174, and arginine 181. The active-site Proton acceptor is aspartate 250. Positions 251 and 260 each coordinate Mg(2+). Aspartate 260 contacts ATP.

It belongs to the SELO family. The cofactor is Mg(2+). Requires Mn(2+) as cofactor.

The enzyme catalyses L-seryl-[protein] + ATP = 3-O-(5'-adenylyl)-L-seryl-[protein] + diphosphate. The catalysed reaction is L-threonyl-[protein] + ATP = 3-O-(5'-adenylyl)-L-threonyl-[protein] + diphosphate. It carries out the reaction L-tyrosyl-[protein] + ATP = O-(5'-adenylyl)-L-tyrosyl-[protein] + diphosphate. It catalyses the reaction L-histidyl-[protein] + UTP = N(tele)-(5'-uridylyl)-L-histidyl-[protein] + diphosphate. The enzyme catalyses L-seryl-[protein] + UTP = O-(5'-uridylyl)-L-seryl-[protein] + diphosphate. The catalysed reaction is L-tyrosyl-[protein] + UTP = O-(5'-uridylyl)-L-tyrosyl-[protein] + diphosphate. In terms of biological role, nucleotidyltransferase involved in the post-translational modification of proteins. It can catalyze the addition of adenosine monophosphate (AMP) or uridine monophosphate (UMP) to a protein, resulting in modifications known as AMPylation and UMPylation. In Rhodopseudomonas palustris (strain ATCC BAA-98 / CGA009), this protein is Protein nucleotidyltransferase YdiU.